A 475-amino-acid chain; its full sequence is Tesmin (475 aa).

A phosphoserine mark is found at Ser-34 and Ser-67. A CRC domain is found at 263–372 (SGPALQGPPK…KCIACKNYEE (110 aa)).

Belongs to the lin-54 family.

Its subcellular location is the cytoplasm. It is found in the nucleus. In terms of biological role, may have a role in spermatogenesis. The protein is Tesmin of Rattus norvegicus (Rat).